Here is a 758-residue protein sequence, read N- to C-terminus: 52 kDa repressor of the inhibitor of the protein kinase (758 aa).

Residues 1–86 form a THAP-type zinc finger; the sequence is MPNFCAAPNC…LRDNAIPTIF (86 aa). The interval 116-141 is disordered; sequence QKKIEETSEQEQETNTNAQNPSAEAV. A Phosphoserine modification is found at Ser-563.

Interacts with DNAJC3, probably sequestring it.

In terms of biological role, upstream regulator of interferon-induced serine/threonine protein kinase R (PKR). May block the PKR-inhibitory function of DNAJC3, resulting in restoration of kinase activity and suppression of cell growth. This Mus musculus (Mouse) protein is 52 kDa repressor of the inhibitor of the protein kinase.